A 485-amino-acid polypeptide reads, in one-letter code: E-selectin (485 aa).

Residues 1 to 22 (MIVSQYLSALTFVLLLFKESRT) form the signal peptide. A C-type lectin domain is found at 23–140 (WSYHASTEMM…CTKQKLALCY (118 aa)). The Extracellular portion of the chain corresponds to 23–430 (WSYHASTEMM…CEAPTVSQTP (408 aa)). Disulfide bonds link C41–C139, C112–C131, C144–C155, C149–C164, C166–C175, C181–C224, C194–C206, C210–C237, C242–C286, C255–C268, C272–C299, C304–C349, C335–C362, C367–C408, and C394–C421. 3 N-linked (GlcNAc...) asparagine glycosylation sites follow: N61, N79, and N88. E102, N104, and E110 together coordinate Ca(2+). A carbohydrate contacts are provided by residues 102–110 (EPNNKQSDE), 114–119 (EIYIKR), and 127–129 (NDE). Ca(2+) contacts are provided by N127 and D128. One can recognise an EGF-like domain in the interval 141-176 (KAACNPTPCGSHGECVETINNYTCQCHPGFKGLKCE). N161 carries an N-linked (GlcNAc...) asparagine glycan. Sushi domains follow at residues 179–239 (VTCP…KCNV), 240–301 (VKCD…TCKA), 302–364 (VSCA…VCEV), and 365–423 (VRCS…TCEA). N203 carries an N-linked (GlcNAc...) asparagine glycan. An N-linked (GlcNAc...) asparagine glycan is attached at N265. 2 N-linked (GlcNAc...) asparagine glycosylation sites follow: N312 and N316. 2 N-linked (GlcNAc...) asparagine glycosylation sites follow: N379 and N401. A helical transmembrane segment spans residues 431 to 453 (LAVGLSTAGVSLVTIPSFLFWLL). Topologically, residues 454-485 (KRLQKKAKKFSPASSCSSLKSNGCYSTPSKLI) are cytoplasmic. The interval 466 to 485 (ASSCSSLKSNGCYSTPSKLI) is disordered.

The protein belongs to the selectin/LECAM family. In terms of assembly, interacts with SELPLG/PSGL1 and PODXL2 through the sialyl Lewis X epitope. SELPLG sulfation appears not to be required for this interaction.

Its subcellular location is the cell membrane. Cell-surface glycoprotein having a role in immunoadhesion. Mediates in the adhesion of blood neutrophils in cytokine-activated endothelium through interaction with SELPLG/PSGL1. May have a role in capillary morphogenesis. The chain is E-selectin (SELE) from Bos taurus (Bovine).